A 346-amino-acid polypeptide reads, in one-letter code: Putative serine/threonine-protein kinase K06H7.1 (346 aa).

Residues 20 to 287 form the Protein kinase domain; it reads YKVVQKLGEG…KLFKLLEDVM (268 aa). Residues 26 to 34 and lysine 50 each bind ATP; that span reads LGEGGCGSV. Aspartate 141 acts as the Proton acceptor in catalysis. Positions 302-326 are disordered; it reads PEKKKNPASQGNKFGLGKKGTKESG.

It belongs to the protein kinase superfamily. Ser/Thr protein kinase family.

It catalyses the reaction L-seryl-[protein] + ATP = O-phospho-L-seryl-[protein] + ADP + H(+). It carries out the reaction L-threonyl-[protein] + ATP = O-phospho-L-threonyl-[protein] + ADP + H(+). The sequence is that of Putative serine/threonine-protein kinase K06H7.1 from Caenorhabditis elegans.